The following is a 242-amino-acid chain: DnaJ homolog subfamily B member 3 (242 aa).

Residues 1 to 69 (MANYYEVLGV…KKRDVYDRYG (69 aa)) form the J domain.

In terms of tissue distribution, testis specific.

May operate as a co-chaperone of the male germ cell- and haploid stage-specific Hsp70 proteins. In Macaca fuscata fuscata (Japanese macaque), this protein is DnaJ homolog subfamily B member 3 (DNAJB3).